We begin with the raw amino-acid sequence, 475 residues long: Ankyrin repeat, SAM and basic leucine zipper domain-containing protein 1 (475 aa).

Positions 1 to 24 are disordered; that stretch reads MAAAVQRGLPVAGGGESSESEDDG. S17, S18, and S20 each carry phosphoserine. 6 ANK repeats span residues 45–74, 78–107, 110–144, 148–177, 181–210, and 214–243; these read EKNEIFKKALTTGDISLVEELLDSGISVES, YGWTPLMYAASVANVELVRVLLDRGANASF, DKHTVLITACSARGSQEQILKCVELLLSRNADPNV, RLMTPIMYAARDGHPQVVALLVAQGAEVNA, NGYTALTWAARQGHKNVVLKLLELGANKML, and DGKTPSEVANKNKHPEIFSLLSLTLNPLEG. In terms of domain architecture, SAM spans 272 to 334; the sequence is SYAAFGDLEI…KILAALKELA (63 aa).

As to quaternary structure, interacts with DDX4, PIWIL1, RANBP9 and TDRD1.

Its subcellular location is the cytoplasm. In terms of biological role, plays a central role during spermatogenesis by repressing transposable elements and preventing their mobilization, which is essential for the germline integrity. Acts via the piRNA metabolic process, which mediates the repression of transposable elements during meiosis by forming complexes composed of piRNAs and Piwi proteins and governs the methylation and subsequent repression of transposons. Its association with pi-bodies suggests a participation in the primary piRNAs metabolic process. Required prior to the pachytene stage to facilitate the production of multiple types of piRNAs, including those associated with repeats involved in the regulation of retrotransposons. May act by mediating protein-protein interactions during germ cell maturation. The sequence is that of Ankyrin repeat, SAM and basic leucine zipper domain-containing protein 1 (ASZ1) from Loxodonta africana (African elephant).